Here is a 348-residue protein sequence, read N- to C-terminus: MSTTGGSNPEYVIARVRARRSALFGDEEYRKLVRMGPAEIARFMEESEYEAEVNALGSRFSGVDLIEYALNQNLAKQFNDILDWADGRLYDLIARYLRKFDAWNVKTVIRGLYSGASREEVESDLIRAGEFDDRLISRLLDAGEIEEVVSVLSGTIFGDGLAAAYEEYEEVGVLVPLENAVDRAFYEQLLDDLVVGEEAKQYREFLEAEIDFRNARNALRIARSGADLDPVDYFIEGGTLFRATELASLATSPDELVSKIRDSRYGDRLSAALSDLEAADSLIGFERALDAALLEYADTLGYVFPLSVTPIVSYILAKEREVDNIRAIARGREAGLDPDAIEAELVIL.

This sequence belongs to the V-ATPase V0D/AC39 subunit family. Has multiple subunits with at least A(3), B(3), C, D, E, F, H, I and proteolipid K(x).

Its subcellular location is the cell membrane. Component of the A-type ATP synthase that produces ATP from ADP in the presence of a proton gradient across the membrane. The protein is A-type ATP synthase subunit C of Haloferax volcanii (strain ATCC 29605 / DSM 3757 / JCM 8879 / NBRC 14742 / NCIMB 2012 / VKM B-1768 / DS2) (Halobacterium volcanii).